The sequence spans 445 residues: NADH-quinone oxidoreductase subunit F (445 aa).

61–70 contributes to the NAD(+) binding site; the sequence is GRGGAGFSTG. 174–221 serves as a coordination point for FMN; the sequence is GAGRYICGEETALINSLEGRRANPRSKPPFPATSGVWGKPTCVNNVET. [4Fe-4S] cluster-binding residues include Cys351, Cys354, Cys357, and Cys398.

Belongs to the complex I 51 kDa subunit family. As to quaternary structure, composed of 13 different subunits. Subunits NuoCD, E, F, and G constitute the peripheral sector of the complex. Requires FMN as cofactor. The cofactor is [4Fe-4S] cluster.

The catalysed reaction is a quinone + NADH + 5 H(+)(in) = a quinol + NAD(+) + 4 H(+)(out). Its function is as follows. NDH-1 shuttles electrons from NADH, via FMN and iron-sulfur (Fe-S) centers, to quinones in the respiratory chain. The immediate electron acceptor for the enzyme in this species is believed to be ubiquinone. Couples the redox reaction to proton translocation (for every two electrons transferred, four hydrogen ions are translocated across the cytoplasmic membrane), and thus conserves the redox energy in a proton gradient. This is NADH-quinone oxidoreductase subunit F (nuoF) from Salmonella typhimurium (strain LT2 / SGSC1412 / ATCC 700720).